Reading from the N-terminus, the 1076-residue chain is Atos homolog protein A (1076 aa).

The segment at 24-32 is transactivation domain 1 (TAD1); it reads ALLITEGRT. Disordered regions lie at residues 700–721 and 739–765; these read ESMS…TQLN and SDQL…QRRS. A compositionally biased stretch (basic and acidic residues) spans 739-754; sequence SDQLKNEQDKQEDPTN. The tract at residues 878–935 is required for macropage invasion; sequence LLGNFEESVLNYRFDPLGIVDGFTAEVGASGAFCPTHLTLPVEVSFYSVSDDNAPSPY. A transactivation domain 2 (TAD2) region spans residues 962-970; the sequence is FNPNKTVVK.

It belongs to the ATOS family.

The protein localises to the nucleus. In terms of biological role, transcription regulator that syncronizes transcriptional and translational programs to promote macrophage invasion of tissues. This Homo sapiens (Human) protein is Atos homolog protein A.